A 358-amino-acid polypeptide reads, in one-letter code: Aromatic amino acid aminotransferase (358 aa).

Residue K214 is modified to N6-(pyridoxal phosphate)lysine.

This sequence belongs to the class-II pyridoxal-phosphate-dependent aminotransferase family. As to quaternary structure, homodimer. It depends on pyridoxal 5'-phosphate as a cofactor.

It catalyses the reaction an aromatic L-alpha-amino acid + 2-oxoglutarate = an aromatic oxo-acid + L-glutamate. Its function is as follows. Aminotransferase that catalyzes the conversion of aromatic amino acids and 2-oxoglutarate into corresponding aromatic oxo acids and L-glutamate. This chain is Aromatic amino acid aminotransferase, found in Rhodococcus opacus (strain B4).